The primary structure comprises 68 residues: Probable tautomerase Cj0270 (68 aa).

Residue Pro2 is the Proton acceptor; via imino nitrogen of the active site.

This sequence belongs to the 4-oxalocrotonate tautomerase family.

The chain is Probable tautomerase Cj0270 from Campylobacter jejuni subsp. jejuni serotype O:2 (strain ATCC 700819 / NCTC 11168).